A 708-amino-acid polypeptide reads, in one-letter code: DNA-directed RNA polymerase III subunit RPC5 (708 aa).

A compositionally biased stretch (basic and acidic residues) spans 146 to 155 (DAKHREREAA). Positions 146 to 170 (DAKHREREAANEAGDSSQDEAEDDV) are disordered. Phosphoserine occurs at positions 161 and 162. Residue lysine 171 forms a Glycyl lysine isopeptide (Lys-Gly) (interchain with G-Cter in SUMO2) linkage. A Phosphoserine modification is found at serine 192. Tyrosine 224 is modified (phosphotyrosine). Residue lysine 432 forms a Glycyl lysine isopeptide (Lys-Gly) (interchain with G-Cter in SUMO2) linkage. Residues 485-552 (QLRVPAVPPG…DSFNGHPPQG (68 aa)) are disordered. A Glycyl lysine isopeptide (Lys-Gly) (interchain with G-Cter in SUMO1); alternate cross-link involves residue lysine 498. Residue lysine 498 forms a Glycyl lysine isopeptide (Lys-Gly) (interchain with G-Cter in SUMO2); alternate linkage. The segment covering 502–519 (VSEEGEEDEEQEAEEEPM) has biased composition (acidic residues). 2 positions are modified to phosphoserine: serine 503 and serine 522. The segment at 556–708 (TPVARELKAF…MWYLKGTVQS (153 aa)) is required for Pol III complex stability. Lysine 659 participates in a covalent cross-link: Glycyl lysine isopeptide (Lys-Gly) (interchain with G-Cter in SUMO2).

In terms of assembly, component of the RNA polymerase III complex consisting of at least 17 subunits: a ten-subunit horseshoe-shaped catalytic core composed of POLR3A/RPC1, POLR3B/RPC2, POLR1C/RPAC1, POLR1D/RPAC2, POLR3K/RPC10, POLR2E/RPABC1, POLR2F/RPABC2, POLR2H/RPABC3, POLR2K/RPABC4 and POLR2L/RPABC5; the stalk composed of two subunits POLR3H/RPC8 and CRCP/RPC9, forming a structural mobile part that protrudes out of the core and functions primarily in transcription initiation; and additional subunits homologous to general transcription factors of the RNA polymerase II machinery, POLR3D/RPC4-POLR3E/RPC5 heterodimer and POLR3/CRPC3-POLR3F/RPC6-POLR3G/RPC7 heterotrimer.

It localises to the nucleus. Functionally, DNA-dependent RNA polymerase catalyzes the transcription of DNA into RNA using the four ribonucleoside triphosphates as substrates. Specific peripheric component of RNA polymerase III (Pol III) which synthesizes small non-coding RNAs including 5S rRNA, snRNAs, tRNAs and miRNAs from at least 500 distinct genomic loci. Assembles with POLR3D/RPC4 forming a subcomplex that binds the Pol III core. Enables recruitment of Pol III at transcription initiation site and drives transcription initiation from both type 2 and type 3 DNA promoters. Required for efficient transcription termination and reinitiation. Plays a key role in sensing and limiting infection by intracellular bacteria and DNA viruses. Acts as a nuclear and cytosolic DNA sensor involved in innate immune response. Can sense non-self dsDNA that serves as template for transcription into dsRNA. The non-self RNA polymerase III transcripts, such as Epstein-Barr virus-encoded RNAs (EBERs) induce type I interferon and NF-kappa-B through the RIG-I pathway. In Homo sapiens (Human), this protein is DNA-directed RNA polymerase III subunit RPC5.